Reading from the N-terminus, the 94-residue chain is uncharacterized protein (94 aa).

Over residues 33–42 (INSLPTFTKP) the composition is skewed to polar residues. A disordered region spans residues 33–57 (INSLPTFTKPNDSNNNVNKSSNDGV). Over residues 43-57 (NDSNNNVNKSSNDGV) the composition is skewed to low complexity.

This is an uncharacterized protein from Dictyostelium discoideum (Social amoeba).